A 526-amino-acid chain; its full sequence is Germ cell-less protein-like 2 (526 aa).

Residues Met1–Pro85 are disordered. Positions Ser49 to Ser55 match the Nuclear localization signal motif. A compositionally biased stretch (basic and acidic residues) spans Cys62–Lys77. The Nuclear localization signal motif lies at Pro85–Arg91. In terms of domain architecture, BTB spans Ser108–Pro178.

Interacts with CUL3. As to expression, expressed predominantly in testis.

The protein resides in the nucleus matrix. Its pathway is protein modification; protein ubiquitination. In terms of biological role, possible function in spermatogenesis. Probable substrate-specific adapter of an E3 ubiquitin-protein ligase complex which mediates the ubiquitination and subsequent proteasomal degradation of target proteins. This Homo sapiens (Human) protein is Germ cell-less protein-like 2.